The chain runs to 367 residues: tRNA-specific 2-thiouridylase MnmA (367 aa).

Residues 13–20 (GLSGGVDS) and Met39 contribute to the ATP site. An interaction with target base in tRNA region spans residues 99–101 (NPD). The active-site Nucleophile is the Cys104. Cys104 and Cys200 form a disulfide bridge. Gly128 contacts ATP. An interaction with tRNA region spans residues 150 to 152 (KDQ). Cys200 acts as the Cysteine persulfide intermediate in catalysis. The interval 307–308 (RY) is interaction with tRNA.

This sequence belongs to the MnmA/TRMU family.

The protein resides in the cytoplasm. It carries out the reaction S-sulfanyl-L-cysteinyl-[protein] + uridine(34) in tRNA + AH2 + ATP = 2-thiouridine(34) in tRNA + L-cysteinyl-[protein] + A + AMP + diphosphate + H(+). In terms of biological role, catalyzes the 2-thiolation of uridine at the wobble position (U34) of tRNA, leading to the formation of s(2)U34. The polypeptide is tRNA-specific 2-thiouridylase MnmA (Neisseria meningitidis serogroup C / serotype 2a (strain ATCC 700532 / DSM 15464 / FAM18)).